A 187-amino-acid chain; its full sequence is Orotate phosphoribosyltransferase (187 aa).

5-phospho-alpha-D-ribose 1-diphosphate is bound by residues Arg98, Lys99, Lys102, His104, and 128-136; that span reads EDVTTTGGS. The orotate site is built by Thr132 and Arg160.

The protein belongs to the purine/pyrimidine phosphoribosyltransferase family. PyrE subfamily. In terms of assembly, homodimer. Requires Mg(2+) as cofactor.

It carries out the reaction orotidine 5'-phosphate + diphosphate = orotate + 5-phospho-alpha-D-ribose 1-diphosphate. It participates in pyrimidine metabolism; UMP biosynthesis via de novo pathway; UMP from orotate: step 1/2. Functionally, catalyzes the transfer of a ribosyl phosphate group from 5-phosphoribose 1-diphosphate to orotate, leading to the formation of orotidine monophosphate (OMP). This chain is Orotate phosphoribosyltransferase, found in Rhodopseudomonas palustris (strain ATCC BAA-98 / CGA009).